Reading from the N-terminus, the 185-residue chain is ATP synthase subunit delta (185 aa).

Belongs to the ATPase delta chain family. As to quaternary structure, F-type ATPases have 2 components, F(1) - the catalytic core - and F(0) - the membrane proton channel. F(1) has five subunits: alpha(3), beta(3), gamma(1), delta(1), epsilon(1). F(0) has three main subunits: a(1), b(2) and c(10-14). The alpha and beta chains form an alternating ring which encloses part of the gamma chain. F(1) is attached to F(0) by a central stalk formed by the gamma and epsilon chains, while a peripheral stalk is formed by the delta and b chains.

The protein resides in the cell inner membrane. Its function is as follows. F(1)F(0) ATP synthase produces ATP from ADP in the presence of a proton or sodium gradient. F-type ATPases consist of two structural domains, F(1) containing the extramembraneous catalytic core and F(0) containing the membrane proton channel, linked together by a central stalk and a peripheral stalk. During catalysis, ATP synthesis in the catalytic domain of F(1) is coupled via a rotary mechanism of the central stalk subunits to proton translocation. In terms of biological role, this protein is part of the stalk that links CF(0) to CF(1). It either transmits conformational changes from CF(0) to CF(1) or is implicated in proton conduction. In Phocaeicola vulgatus (strain ATCC 8482 / DSM 1447 / JCM 5826 / CCUG 4940 / NBRC 14291 / NCTC 11154) (Bacteroides vulgatus), this protein is ATP synthase subunit delta.